We begin with the raw amino-acid sequence, 64 residues long: uncharacterized protein (64 aa).

Residues 1–64 (MMITRGWEGW…LDPAISRSSS (64 aa)) form a disordered region. Over residues 16–28 (RGAGTGTGLGGPG) the composition is skewed to gly residues.

This is an uncharacterized protein from Homo sapiens (Human).